Reading from the N-terminus, the 352-residue chain is DNA polymerase IV (352 aa).

The UmuC domain occupies 7–187 (IIHIDMDCFY…LSLKKIPGIG (181 aa)). 2 residues coordinate Mg(2+): D11 and D105. E106 is a catalytic residue.

This sequence belongs to the DNA polymerase type-Y family. In terms of assembly, monomer. It depends on Mg(2+) as a cofactor.

The protein localises to the cytoplasm. It carries out the reaction DNA(n) + a 2'-deoxyribonucleoside 5'-triphosphate = DNA(n+1) + diphosphate. Functionally, poorly processive, error-prone DNA polymerase involved in untargeted mutagenesis. Copies undamaged DNA at stalled replication forks, which arise in vivo from mismatched or misaligned primer ends. These misaligned primers can be extended by PolIV. Exhibits no 3'-5' exonuclease (proofreading) activity. May be involved in translesional synthesis, in conjunction with the beta clamp from PolIII. The polypeptide is DNA polymerase IV (Colwellia psychrerythraea (strain 34H / ATCC BAA-681) (Vibrio psychroerythus)).